Consider the following 204-residue polypeptide: Rho GDP-dissociation inhibitor 1 (204 aa).

The disordered stretch occupies residues 1–36; sequence MAEQEPTAEQLAQIAAENEEDEHSVNYKPPAQKSIQ. An N-acetylalanine modification is found at alanine 2. Residue serine 34 is modified to Phosphoserine. Lysine 43 carries the N6-acetyllysine modification. The residue at position 47 (serine 47) is a Phosphoserine. Lysine 105 and lysine 127 each carry N6-acetyllysine. Residues lysine 138 and lysine 141 each participate in a glycyl lysine isopeptide (Lys-Gly) (interchain with G-Cter in SUMO1); alternate cross-link. Glycyl lysine isopeptide (Lys-Gly) (interchain with G-Cter in SUMO2); alternate cross-links involve residues lysine 138 and lysine 141. The residue at position 141 (lysine 141) is an N6-acetyllysine; alternate. N6-succinyllysine; alternate is present on lysine 141. Lysine 178 is modified (N6-acetyllysine).

Belongs to the Rho GDI family. Monomer. Interacts with FER. Interacts with PLXNB3. Forms a heterodimer with RAC1. Interacts with RHOA, the affinity is increased by three orders of magnitude when RHOA is prenylated. Interacts with PSMD10; the interaction increases ARHGDIA association with RHOA, leading to ARHGDIA-mediated inactivation of RHOA and ROCK and prolonged AKT activation. Interacts with KANK2; the interaction is direct and may regulate the interaction of ARHGDIA with RHOA, RAC1 and CDC42. Interacts with RHOC. Interacts with CDC42. Interacts with NGFR (via death domain); NGFR binding decreases the affinity for RHOA.

It localises to the cytoplasm. Functionally, controls Rho proteins homeostasis. Regulates the GDP/GTP exchange reaction of the Rho proteins by inhibiting the dissociation of GDP from them, and the subsequent binding of GTP to them. Retains Rho proteins such as CDC42, RAC1 and RHOA in an inactive cytosolic pool, regulating their stability and protecting them from degradation. Actively involved in the recycling and distribution of activated Rho GTPases in the cell, mediates extraction from membranes of both inactive and activated molecules due its exceptionally high affinity for prenylated forms. Through the modulation of Rho proteins, may play a role in cell motility regulation. In glioma cells, inhibits cell migration and invasion by mediating the signals of SEMA5A and PLXNB3 that lead to inactivation of RAC1. This chain is Rho GDP-dissociation inhibitor 1 (ARHGDIA), found in Homo sapiens (Human).